Reading from the N-terminus, the 477-residue chain is PEP-dependent dihydroxyacetone kinase, phosphoryl donor subunit DhaM (477 aa).

Residues 1 to 135 (MIGLIIVSHS…QALQAKQQQL (135 aa)) enclose the PTS EIIA type-4 domain. His-9 functions as the Tele-phosphohistidine intermediate in the catalytic mechanism. The region spanning 156-243 (ALTTQWVVKN…QLAQHNFGDN (88 aa)) is the HPr domain. The active-site Pros-phosphohistidine intermediate is His-170. The segment at 269–477 (HAPNTELCIS…IETRSLIVAS (209 aa)) is PTS EI-like, N-terminal part. The Tele-phosphohistidine intermediate role is filled by His-435.

The protein belongs to the PEP-utilizing enzyme family. Homodimer. The dihydroxyacetone kinase complex is composed of a homodimer of DhaM, a homodimer of DhaK and the subunit DhaL.

The catalysed reaction is dihydroxyacetone + phosphoenolpyruvate = dihydroxyacetone phosphate + pyruvate. In terms of biological role, component of the dihydroxyacetone kinase complex, which is responsible for the phosphoenolpyruvate (PEP)-dependent phosphorylation of dihydroxyacetone. DhaM serves as the phosphoryl donor. Is phosphorylated by phosphoenolpyruvate in an EI- and HPr-dependent reaction, and a phosphorelay system on histidine residues finally leads to phosphoryl transfer to DhaL and dihydroxyacetone. This chain is PEP-dependent dihydroxyacetone kinase, phosphoryl donor subunit DhaM, found in Providencia stuartii (strain MRSN 2154).